Here is a 279-residue protein sequence, read N- to C-terminus: Energy-coupling factor transporter ATP-binding protein EcfA2 (279 aa).

The ABC transporter domain maps to 3-245 (ITLKNVSYTY…LDFMESIQLG (243 aa)). 40-47 (GHTGSGKS) contributes to the ATP binding site.

Belongs to the ABC transporter superfamily. Energy-coupling factor EcfA family. As to quaternary structure, forms a stable energy-coupling factor (ECF) transporter complex composed of 2 membrane-embedded substrate-binding proteins (S component), 2 ATP-binding proteins (A component) and 2 transmembrane proteins (T component).

Its subcellular location is the cell membrane. In terms of biological role, ATP-binding (A) component of a common energy-coupling factor (ECF) ABC-transporter complex. Unlike classic ABC transporters this ECF transporter provides the energy necessary to transport a number of different substrates. This chain is Energy-coupling factor transporter ATP-binding protein EcfA2, found in Streptococcus sanguinis (strain SK36).